A 456-amino-acid chain; its full sequence is Histidine--tRNA ligase (456 aa).

This sequence belongs to the class-II aminoacyl-tRNA synthetase family. In terms of assembly, homodimer.

The protein localises to the cytoplasm. It catalyses the reaction tRNA(His) + L-histidine + ATP = L-histidyl-tRNA(His) + AMP + diphosphate + H(+). The sequence is that of Histidine--tRNA ligase (hisS) from Borreliella burgdorferi (strain ATCC 35210 / DSM 4680 / CIP 102532 / B31) (Borrelia burgdorferi).